Here is a 681-residue protein sequence, read N- to C-terminus: tRNA wybutosine-synthesizing protein 4 (681 aa).

Residues 1-11 (MSNKNQRKTKS) are compositionally biased toward basic residues. A disordered region spans residues 1-21 (MSNKNQRKTKSKDREVRKTND). Residues Arg66, Gly92, Asp119, 165–166 (NL), and Glu193 each bind S-adenosyl-L-methionine.

It belongs to the methyltransferase superfamily. LCMT family.

The catalysed reaction is 7-[(3S)-3-amino-3-carboxypropyl]wyosine(37) in tRNA(Phe) + S-adenosyl-L-methionine = 7-[(3S)-(3-amino-3-methoxycarbonyl)propyl]wyosine(37) in tRNA(Phe) + S-adenosyl-L-homocysteine. The enzyme catalyses 7-[(3S)-(3-amino-3-methoxycarbonyl)propyl]wyosine(37) in tRNA(Phe) + S-adenosyl-L-methionine + CO2 = wybutosine(37) in tRNA(Phe) + S-adenosyl-L-homocysteine + 2 H(+). It functions in the pathway tRNA modification; wybutosine-tRNA(Phe) biosynthesis. In terms of biological role, probable S-adenosyl-L-methionine-dependent methyltransferase that acts as a component of the wybutosine biosynthesis pathway. Wybutosine is a hyper modified guanosine with a tricyclic base found at the 3'-position adjacent to the anticodon of eukaryotic phenylalanine tRNA. May methylate the carboxyl group of leucine residues to form alpha-leucine ester residues. The sequence is that of tRNA wybutosine-synthesizing protein 4 (ppm2) from Schizosaccharomyces pombe (strain 972 / ATCC 24843) (Fission yeast).